Consider the following 77-residue polypeptide: Protein IDA (77 aa).

Residues 1–26 (MAPCRTMMVLLCFVLFLAASSSCVAA) form the signal peptide. Positions 56 to 69 (GVPIPPSAPSKRHN) are RLK5-binding.

As to quaternary structure, interaction with RLK5. As to expression, expressed specifically in the floral abscission zone.

The protein localises to the secreted. The protein resides in the extracellular space. In terms of biological role, involved in an ethylene-independent separation step of floral abscission. Promotes abscission zone (AZ) cells rounding. May act with RLK5 and HSL2 as ligand-receptor pairs. This is Protein IDA from Arabidopsis thaliana (Mouse-ear cress).